Here is a 285-residue protein sequence, read N- to C-terminus: Ribosomal protein L11 methyltransferase (285 aa).

Thr-131, Gly-154, Asp-176, and Asn-223 together coordinate S-adenosyl-L-methionine.

The protein belongs to the methyltransferase superfamily. PrmA family.

It localises to the cytoplasm. The catalysed reaction is L-lysyl-[protein] + 3 S-adenosyl-L-methionine = N(6),N(6),N(6)-trimethyl-L-lysyl-[protein] + 3 S-adenosyl-L-homocysteine + 3 H(+). Its function is as follows. Methylates ribosomal protein L11. The polypeptide is Ribosomal protein L11 methyltransferase (Brucella abortus (strain S19)).